Here is a 141-residue protein sequence, read N- to C-terminus: SLSASEKAAVLSIVGKIGSQGSALGSEALTRLFLSFPQTKTYFPHFDLTPGSADLNTHGGKIINALAGAANHLDDLAGNLSSLSDLHAYNLRVDPGNFPLLAHIIQVVLATHFPGDFTAEVQAAWDKFLALVSAVLTSKYR.

At serine 1 the chain carries N-acetylserine. In terms of domain architecture, Globin spans 1–141 (SLSASEKAAV…VSAVLTSKYR (141 aa)). Histidine 58 provides a ligand contact to O2. Histidine 87 provides a ligand contact to heme b.

It belongs to the globin family. In terms of assembly, heterotetramer of two alpha chains and two beta chains. Red blood cells.

Functionally, this is a tadpole (larval) alpha chain. The protein is Hemoglobin subunit alpha-3 of Aquarana catesbeiana (American bullfrog).